Here is a 219-residue protein sequence, read N- to C-terminus: Protein OPG170 (219 aa).

The N-terminal stretch at 1–16 (MYSLVFVILMCIPFSF) is a signal peptide. Residue asparagine 70 is glycosylated (N-linked (GlcNAc...) asparagine; by host).

Belongs to the orthopoxvirus OPG170 family.

The protein localises to the secreted. May interact with several cellular chemokines to interfere with chemokine-glycosaminoglycan (GAG) interactions at the cell surface to alter chemotaxis of nearby responsive cells. This chain is Protein OPG170 (OPG170), found in Bos taurus (Bovine).